A 152-amino-acid chain; its full sequence is Large ribosomal subunit protein bL9 (152 aa).

It belongs to the bacterial ribosomal protein bL9 family.

Functionally, binds to the 23S rRNA. The sequence is that of Large ribosomal subunit protein bL9 from Synechococcus sp. (strain CC9311).